The primary structure comprises 331 residues: Phenylalanine--tRNA ligase alpha subunit (331 aa).

Glutamate 252 provides a ligand contact to Mg(2+).

This sequence belongs to the class-II aminoacyl-tRNA synthetase family. Phe-tRNA synthetase alpha subunit type 1 subfamily. Tetramer of two alpha and two beta subunits. It depends on Mg(2+) as a cofactor.

The protein resides in the cytoplasm. The enzyme catalyses tRNA(Phe) + L-phenylalanine + ATP = L-phenylalanyl-tRNA(Phe) + AMP + diphosphate + H(+). This is Phenylalanine--tRNA ligase alpha subunit from Hahella chejuensis (strain KCTC 2396).